Here is a 69-residue protein sequence, read N- to C-terminus: Sec-independent protein translocase protein TatA (69 aa).

A helical transmembrane segment spans residues Met-1–Gly-21. Positions Glu-48–Ser-69 are disordered.

This sequence belongs to the TatA/E family. Forms a complex with TatC.

It is found in the cell inner membrane. In terms of biological role, part of the twin-arginine translocation (Tat) system that transports large folded proteins containing a characteristic twin-arginine motif in their signal peptide across membranes. TatA could form the protein-conducting channel of the Tat system. This chain is Sec-independent protein translocase protein TatA, found in Chlorobium phaeobacteroides (strain BS1).